We begin with the raw amino-acid sequence, 387 residues long: MKALHFGAGNIGRGFIGKLLADAGAQLTFADVNQPLLDALNKRKSYQVNVVGEQARVEEVKNVSAVNSGSPEVVALIAEADIVTTAVGPQILARIAATVAQGLITRHQQGNTRPLNIIACENMVRGTSQLKQHVFAALSEDEQRWVEQHVGFVDSAVDRIVPPSEAGSTDILAVTVETFSEWIVDGTQFKGQPPEIVGMELTDNLMAFVERKLFTLNTGHAITAYLGQLAGHQTIRDAILDPAVRQTVKGAMEESGAVLIKRYAFDPQKHAAYINKILSRFENPYLHDDVERVGRQPLRKLSAGDRLIKPLLGTLEYQLPHDSLVTGIAAAMSYRSEQDPQAQELVTLLAQLGPKAALAQISDLPADSEVVEQAVSVYNAMQQKLAH.

An NAD(+)-binding site is contributed by 3-14; the sequence is ALHFGAGNIGRG.

The protein belongs to the mannitol dehydrogenase family.

The enzyme catalyses D-mannitol 1-phosphate + NAD(+) = beta-D-fructose 6-phosphate + NADH + H(+). The protein is Mannitol-1-phosphate 5-dehydrogenase of Yersinia pseudotuberculosis serotype IB (strain PB1/+).